Reading from the N-terminus, the 322-residue chain is Lipoyl synthase (322 aa).

The segment at 1–24 (MVTVLDTVSKPRPRHPEKAHRPDQ) is disordered. Over residues 14 to 24 (RHPEKAHRPDQ) the composition is skewed to basic and acidic residues. Residues cysteine 59, cysteine 64, cysteine 70, cysteine 85, cysteine 89, cysteine 92, and serine 298 each coordinate [4Fe-4S] cluster. The 217-residue stretch at 71–287 (WDKKHATFMI…ETIAYTKGFL (217 aa)) folds into the Radical SAM core domain.

Belongs to the radical SAM superfamily. Lipoyl synthase family. [4Fe-4S] cluster serves as cofactor.

It is found in the cytoplasm. The catalysed reaction is [[Fe-S] cluster scaffold protein carrying a second [4Fe-4S](2+) cluster] + N(6)-octanoyl-L-lysyl-[protein] + 2 oxidized [2Fe-2S]-[ferredoxin] + 2 S-adenosyl-L-methionine + 4 H(+) = [[Fe-S] cluster scaffold protein] + N(6)-[(R)-dihydrolipoyl]-L-lysyl-[protein] + 4 Fe(3+) + 2 hydrogen sulfide + 2 5'-deoxyadenosine + 2 L-methionine + 2 reduced [2Fe-2S]-[ferredoxin]. It participates in protein modification; protein lipoylation via endogenous pathway; protein N(6)-(lipoyl)lysine from octanoyl-[acyl-carrier-protein]: step 2/2. Its function is as follows. Catalyzes the radical-mediated insertion of two sulfur atoms into the C-6 and C-8 positions of the octanoyl moiety bound to the lipoyl domains of lipoate-dependent enzymes, thereby converting the octanoylated domains into lipoylated derivatives. This Chelativorans sp. (strain BNC1) protein is Lipoyl synthase.